The sequence spans 252 residues: Cytochrome c oxidase subunit 2 (252 aa).

Residues 1-39 lie on the Mitochondrial intermembrane side of the membrane; the sequence is MFLIMLKGHILMDAPTPWGIFFQDSASPQMEGIMELHNN. Residues 40 to 59 traverse the membrane as a helical segment; sequence IMFYLAIILFTVTWMMITII. Residues 60-81 are Mitochondrial matrix-facing; the sequence is RNFVAKKSPIAHKYMNHGTLIE. The chain crosses the membrane as a helical span at residues 82–105; the sequence is LIWTITPAFILILIAFPSFKLLYL. Topologically, residues 106-252 are mitochondrial intermembrane; the sequence is MDEVMDPSLV…LLWLRDQMEG (147 aa). Cu cation is bound by residues H184, C219, E221, C223, H227, and M230. Position 221 (E221) interacts with Mg(2+).

The protein belongs to the cytochrome c oxidase subunit 2 family. In terms of assembly, component of the cytochrome c oxidase (complex IV, CIV), a multisubunit enzyme composed of a catalytic core of 3 subunits and several supernumerary subunits. The complex exists as a monomer or a dimer and forms supercomplexes (SCs) in the inner mitochondrial membrane with ubiquinol-cytochrome c oxidoreductase (cytochrome b-c1 complex, complex III, CIII). Requires Cu cation as cofactor.

The protein resides in the mitochondrion inner membrane. The enzyme catalyses 4 Fe(II)-[cytochrome c] + O2 + 8 H(+)(in) = 4 Fe(III)-[cytochrome c] + 2 H2O + 4 H(+)(out). Functionally, component of the cytochrome c oxidase, the last enzyme in the mitochondrial electron transport chain which drives oxidative phosphorylation. The respiratory chain contains 3 multisubunit complexes succinate dehydrogenase (complex II, CII), ubiquinol-cytochrome c oxidoreductase (cytochrome b-c1 complex, complex III, CIII) and cytochrome c oxidase (complex IV, CIV), that cooperate to transfer electrons derived from NADH and succinate to molecular oxygen, creating an electrochemical gradient over the inner membrane that drives transmembrane transport and the ATP synthase. Cytochrome c oxidase is the component of the respiratory chain that catalyzes the reduction of oxygen to water. Electrons originating from reduced cytochrome c in the intermembrane space (IMS) are transferred via the dinuclear copper A center (CU(A)) of subunit 2 and heme A of subunit 1 to the active site in subunit 1, a binuclear center (BNC) formed by heme A3 and copper B (CU(B)). The BNC reduces molecular oxygen to 2 water molecules using 4 electrons from cytochrome c in the IMS and 4 protons from the mitochondrial matrix. The chain is Cytochrome c oxidase subunit 2 (cox2) from Emericella nidulans (Aspergillus nidulans).